Reading from the N-terminus, the 461-residue chain is Photosystem II CP43 reaction center protein (461 aa).

Residues 1–2 constitute a propeptide that is removed on maturation; that stretch reads ME. Thr-3 carries the post-translational modification N-acetylthreonine. Thr-3 carries the phosphothreonine modification. The next 5 membrane-spanning stretches (helical) occupy residues 57–81, 122–143, 166–188, 243–263, and 279–300; these read LFEVAHFVPEKPMYEQGLILLPHLA, LLGPETLEESFPFFGYVWKDRN, KALYFGGVYDTWAPGGGDVRKIT, KPFAWARRALVWSGEAYLSYS, and WFNNTAYPSEFYGPTGPEASQA. Glu-355 is a [CaMn4O5] cluster binding site. The helical transmembrane segment at 435–459 threads the bilayer; it reads RARAAAAGFEKGIDRDFEPVLSMTP.

It belongs to the PsbB/PsbC family. PsbC subfamily. PSII is composed of 1 copy each of membrane proteins PsbA, PsbB, PsbC, PsbD, PsbE, PsbF, PsbH, PsbI, PsbJ, PsbK, PsbL, PsbM, PsbT, PsbX, PsbY, PsbZ, Psb30/Ycf12, at least 3 peripheral proteins of the oxygen-evolving complex and a large number of cofactors. It forms dimeric complexes. Binds multiple chlorophylls and provides some of the ligands for the Ca-4Mn-5O cluster of the oxygen-evolving complex. It may also provide a ligand for a Cl- that is required for oxygen evolution. PSII binds additional chlorophylls, carotenoids and specific lipids. is required as a cofactor.

The protein localises to the plastid. It is found in the chloroplast thylakoid membrane. One of the components of the core complex of photosystem II (PSII). It binds chlorophyll and helps catalyze the primary light-induced photochemical processes of PSII. PSII is a light-driven water:plastoquinone oxidoreductase, using light energy to abstract electrons from H(2)O, generating O(2) and a proton gradient subsequently used for ATP formation. The protein is Photosystem II CP43 reaction center protein of Gossypium barbadense (Sea Island cotton).